Reading from the N-terminus, the 445-residue chain is NAD(P)H coenzyme A polysulfide/persulfide reductase (445 aa).

FAD is bound at residue 16 to 17 (AA). Residue R27 participates in CoA binding. Residues 38–39 (EA) and 45–47 (HAP) contribute to the FAD site. Residues 44-48 (SHAPC), 65-66 (YY), and R75 each bind CoA. C48 serves as the catalytic Redox-active. Residues V85, D283, and A301 each coordinate FAD. Positions 305 and 361 each coordinate CoA. Y425 is a binding site for FAD. CoA is bound by residues W433 and R441.

It belongs to the class-III pyridine nucleotide-disulfide oxidoreductase family. Homodimer. Homotetramer. FAD serves as cofactor.

The enzyme catalyses NADP(+) + 2 CoA = CoA-disulfide + NADPH + H(+). It catalyses the reaction NAD(+) + 2 CoA = CoA-disulfide + NADH + H(+). Its function is as follows. Catalyzes the NAD(P)H-dependent reduction of polysulfide, CoA-polysulfides, and CoA persulfide, as well as the reduction of a range of other small persulfides, including TNB and glutathione persulfides. The likely in vivo substrates are di-, poly-, and persulfide derivatives of coenzyme A, although polysulfide itself is also efficiently reduced. Shows coenzyme A disulfide reductase (CoADR) activity with both NADH and NADPH, with a preference for NADPH. May also play a role in the reduction of elemental sulfur. This Pyrococcus horikoshii (strain ATCC 700860 / DSM 12428 / JCM 9974 / NBRC 100139 / OT-3) protein is NAD(P)H coenzyme A polysulfide/persulfide reductase.